Consider the following 450-residue polypeptide: tRNA-2-methylthio-N(6)-dimethylallyladenosine synthase (450 aa).

An MTTase N-terminal domain is found at 14–132 (GEFFIETWGC…FPNYLNEVKK (119 aa)). 6 residues coordinate [4Fe-4S] cluster: Cys23, Cys59, Cys93, Cys169, Cys173, and Cys176. Residues 155 to 385 (RKNSMKAFVT…VEVVNEISAK (231 aa)) form the Radical SAM core domain. The TRAM domain maps to 388-450 (KAYEGKIEEV…NSFSLTGEEI (63 aa)).

This sequence belongs to the methylthiotransferase family. MiaB subfamily. In terms of assembly, monomer. [4Fe-4S] cluster is required as a cofactor.

It localises to the cytoplasm. The enzyme catalyses N(6)-dimethylallyladenosine(37) in tRNA + (sulfur carrier)-SH + AH2 + 2 S-adenosyl-L-methionine = 2-methylsulfanyl-N(6)-dimethylallyladenosine(37) in tRNA + (sulfur carrier)-H + 5'-deoxyadenosine + L-methionine + A + S-adenosyl-L-homocysteine + 2 H(+). Catalyzes the methylthiolation of N6-(dimethylallyl)adenosine (i(6)A), leading to the formation of 2-methylthio-N6-(dimethylallyl)adenosine (ms(2)i(6)A) at position 37 in tRNAs that read codons beginning with uridine. The sequence is that of tRNA-2-methylthio-N(6)-dimethylallyladenosine synthase from Clostridium botulinum (strain Okra / Type B1).